Reading from the N-terminus, the 286-residue chain is 3-hydroxyanthranilate 3,4-dioxygenase (286 aa).

The tract at residues 1–160 (MERPVRVKAW…SEQYRTGKPN (160 aa)) is domain A (catalytic). R43 contacts O2. Fe cation-binding residues include H47, E53, and H91. Residue E53 participates in substrate binding. Positions 95 and 105 each coordinate substrate. Residues 161 to 177 (PDQLLKEPPFPLSTRSV) are linker. The domain B stretch occupies residues 178-286 (MEPMCLEAWL…QDPACKKSLG (109 aa)).

This sequence belongs to the 3-HAO family. Monomer. Fe(2+) serves as cofactor.

Its subcellular location is the cytoplasm. The protein resides in the cytosol. It catalyses the reaction 3-hydroxyanthranilate + O2 = (2Z,4Z)-2-amino-3-carboxymuconate 6-semialdehyde. It participates in cofactor biosynthesis; NAD(+) biosynthesis; quinolinate from L-kynurenine: step 3/3. In terms of biological role, catalyzes the oxidative ring opening of 3-hydroxyanthranilate to 2-amino-3-carboxymuconate semialdehyde, which spontaneously cyclizes to quinolinate. In Bos taurus (Bovine), this protein is 3-hydroxyanthranilate 3,4-dioxygenase.